Consider the following 729-residue polypeptide: MLYKGDTLYLDWLEDGIAELVFDAPGSVNKLDTATVASLGEAIGVLEQQSDLKGLLLRSNKAAFIVGADITEFLSLFLVPEEQLSQWLHFANSVFNRLEDLPVPTIAAVNGYALGGGCECVLATDYRLATPDLRIGLPETKLGIMPGFGGSVRMPRMLGADSALEIIAAGKDVGADQALKIGLVDGVVKAEKLIEGAMAILRQAINGDLDWKAKRQPKQEPLKLSKIEATMSFTIAKGMVAQTAGKHYPAPITAVKTIEAAARFGREEALNLENKSFVPLAHTNEARALVGIFLNDQYVKGKAKKLTKDVETPKQAAVLGAGIMGGGIAYQSAWKGVPVVMKDINDKSLTLGMTEAAKLLNKQLERGKIDGLKLAGVISTIHPTLDYAGFDRVDIVVEAVVENPKVKKAVLAETEQKVRQDTVLASNTSTIPISELANALERPENFCGMHFFNPVHRMPLVEIIRGEKSSDETIAKVVAWASKMGKTPIVVNDCPGFFVNRVLFPYFAGFSQLLRDGADFRKIDKVMEKQFGWPMGPAYLLDVVGIDTAHHAQAVMAAGFPQRMQKDYRDAIDALFDANRFGQKNGLGFWRYKEDSKGKPKKEEDAAVEDLLAEVSQPKRDFSEEEIIARMMIPMVNEVVRCLEEGIIATPAEADMALVYGLGFPPFHGGAFRWLDTLGSAKYLDMAQQYQHLGPLYEVPEGLRNKARHNEPYYPPVEPARPVGDLKTA.

Residues 1-189 (MLYKGDTLYL…KIGLVDGVVK (189 aa)) form an enoyl-CoA hydratase/isomerase region. Substrate is bound at residue D296. A 3-hydroxyacyl-CoA dehydrogenase region spans residues 311–729 (ETPKQAAVLG…ARPVGDLKTA (419 aa)). Residues M324, D343, 400 to 402 (VVE), K407, and S429 contribute to the NAD(+) site. H450 serves as the catalytic For 3-hydroxyacyl-CoA dehydrogenase activity. N453 is a binding site for NAD(+). Residues N500 and Y660 each contribute to the substrate site. The interval 708-729 (RHNEPYYPPVEPARPVGDLKTA) is disordered.

The protein in the N-terminal section; belongs to the enoyl-CoA hydratase/isomerase family. In the C-terminal section; belongs to the 3-hydroxyacyl-CoA dehydrogenase family. As to quaternary structure, heterotetramer of two alpha chains (FadB) and two beta chains (FadA).

The enzyme catalyses a (3S)-3-hydroxyacyl-CoA + NAD(+) = a 3-oxoacyl-CoA + NADH + H(+). It carries out the reaction a (3S)-3-hydroxyacyl-CoA = a (2E)-enoyl-CoA + H2O. It catalyses the reaction a 4-saturated-(3S)-3-hydroxyacyl-CoA = a (3E)-enoyl-CoA + H2O. The catalysed reaction is (3S)-3-hydroxybutanoyl-CoA = (3R)-3-hydroxybutanoyl-CoA. The enzyme catalyses a (3Z)-enoyl-CoA = a 4-saturated (2E)-enoyl-CoA. It carries out the reaction a (3E)-enoyl-CoA = a 4-saturated (2E)-enoyl-CoA. It functions in the pathway lipid metabolism; fatty acid beta-oxidation. Involved in the aerobic and anaerobic degradation of long-chain fatty acids via beta-oxidation cycle. Catalyzes the formation of 3-oxoacyl-CoA from enoyl-CoA via L-3-hydroxyacyl-CoA. It can also use D-3-hydroxyacyl-CoA and cis-3-enoyl-CoA as substrate. The protein is Fatty acid oxidation complex subunit alpha of Shigella flexneri serotype 5b (strain 8401).